The chain runs to 370 residues: Cysteine-type anaerobic sulfatase-maturating enzyme (370 aa).

The 227-residue stretch at 1-227 (MPPLSLLIKP…LKNLFDFWYE (227 aa)) folds into the Radical SAM core domain. The [4Fe-4S] cluster site is built by Cys15 and Cys19. Residue Tyr21 coordinates S-adenosyl-L-methionine. A [4Fe-4S] cluster-binding site is contributed by Cys22. S-adenosyl-L-methionine is bound by residues Gly66, Ser122, Arg134, and Leu195. 3 residues coordinate [4Fe-4S] cluster: Cys255, Cys261, and Cys276. Asp277 functions as the Proton acceptor in the catalytic mechanism. [4Fe-4S] cluster-binding residues include Cys317, Cys320, Cys326, Cys330, and Cys348.

This sequence belongs to the radical SAM superfamily. Anaerobic sulfatase-maturating enzyme family. In terms of assembly, monomer. Requires [4Fe-4S] cluster as cofactor.

It carries out the reaction L-cysteinyl-[sulfatase] + S-adenosyl-L-methionine + H2O = 3-oxo-L-alanyl-[sulfatase] + hydrogen sulfide + 5'-deoxyadenosine + L-methionine + 2 H(+). Its pathway is protein modification; sulfatase oxidation. In terms of biological role, involved in 'Cys-type' sulfatase maturation under anaerobic conditions. Catalyzes the post-translational modification of cysteine ('Cys-51' in the arylsulfatase CPF_0221) into 3-oxoalanine (also known as C(alpha)-formylglycine (FGly)), by a free radical chemical mechanism initiated via the reductive cleavage of S-adenosyl-L-methionine (SAM). Is also able to oxidize a serine residue in a synthetic substrate to FGly in vitro, and in a serine variant of a Cys-type sulfatase in vivo, but this activity is not physiological. Converts threonyl peptides to the corresponding ketone product, and also allo-threonyl peptides, but with a significantly reduced efficiency. The sequence is that of Cysteine-type anaerobic sulfatase-maturating enzyme from Clostridium perfringens (strain ATCC 13124 / DSM 756 / JCM 1290 / NCIMB 6125 / NCTC 8237 / Type A).